Here is a 185-residue protein sequence, read N- to C-terminus: Elongation factor P (185 aa).

This sequence belongs to the elongation factor P family.

It is found in the cytoplasm. It functions in the pathway protein biosynthesis; polypeptide chain elongation. Involved in peptide bond synthesis. Stimulates efficient translation and peptide-bond synthesis on native or reconstituted 70S ribosomes in vitro. Probably functions indirectly by altering the affinity of the ribosome for aminoacyl-tRNA, thus increasing their reactivity as acceptors for peptidyl transferase. The polypeptide is Elongation factor P (Bacillus cytotoxicus (strain DSM 22905 / CIP 110041 / 391-98 / NVH 391-98)).